We begin with the raw amino-acid sequence, 417 residues long: Hydroxysteroid dehydrogenase-like protein 2 (417 aa).

NADP(+)-binding positions include 17–23, Lys42, and Asp74; that span reads GASRGIG. Tyr168 functions as the Proton acceptor in the catalytic mechanism. Residue Lys172 coordinates NADP(+). One can recognise an SCP2 domain in the interval 306–414; sequence ASPLQETFKA…KLEKILGQMN (109 aa).

This sequence belongs to the short-chain dehydrogenases/reductases (SDR) family.

It is found in the peroxisome. It localises to the mitochondrion. Functionally, has apparently no steroid dehydrogenase activity. Might act as a metabolic regulator that affects systemic adaptation to nutritional cues. The protein is Hydroxysteroid dehydrogenase-like protein 2 (hsdl2) of Xenopus laevis (African clawed frog).